The primary structure comprises 365 residues: MKSVRSFIRDDIQAMSAYQIADVPPGFAKLDSMESPVHPFAGHETLLQEWQARLAAAPIHLYPNPSGSGLQEALRSAFDIPDCADIALGNGSDELIQFITMLTAKPGAAMLAAEPSFVMYRHNAALYGMDYVGVPLNGDFTLNLPAVLEAVRKHRPALTFIAYPNNPTGVCFTRAEIEAVIEASDGIVVVDEAYGAFNGDSFLPQAGRIPNLIVLRTLSKIGFAGLRIGYAAGCPEVIGELQKILPPYNMNQLSLTTAKLALRHYGIISANIDSLKNERERMFAELGKICRLNTFSSQANFITIRVPDADLLFDTLKQNRILVKKLHGAHPLLEHCLRITVGSPAQNDAVLNIIRQLYCQPTDFL.

Lysine 220 carries the post-translational modification N6-(pyridoxal phosphate)lysine.

The protein belongs to the class-II pyridoxal-phosphate-dependent aminotransferase family. Histidinol-phosphate aminotransferase subfamily. As to quaternary structure, homodimer. The cofactor is pyridoxal 5'-phosphate.

The catalysed reaction is L-histidinol phosphate + 2-oxoglutarate = 3-(imidazol-4-yl)-2-oxopropyl phosphate + L-glutamate. It participates in amino-acid biosynthesis; L-histidine biosynthesis; L-histidine from 5-phospho-alpha-D-ribose 1-diphosphate: step 7/9. The chain is Histidinol-phosphate aminotransferase from Neisseria meningitidis serogroup B (strain ATCC BAA-335 / MC58).